A 335-amino-acid chain; its full sequence is Phosphate acyltransferase (335 aa).

Belongs to the PlsX family. Homodimer. Probably interacts with PlsY.

The protein localises to the cytoplasm. It carries out the reaction a fatty acyl-[ACP] + phosphate = an acyl phosphate + holo-[ACP]. It participates in lipid metabolism; phospholipid metabolism. In terms of biological role, catalyzes the reversible formation of acyl-phosphate (acyl-PO(4)) from acyl-[acyl-carrier-protein] (acyl-ACP). This enzyme utilizes acyl-ACP as fatty acyl donor, but not acyl-CoA. The chain is Phosphate acyltransferase from Brevibacillus brevis (strain 47 / JCM 6285 / NBRC 100599).